We begin with the raw amino-acid sequence, 52 residues long: DNA-directed RNA polymerase subunit Rpo12 (52 aa).

Residues Cys-13, Cys-30, and Cys-33 each coordinate Zn(2+).

This sequence belongs to the archaeal Rpo12/eukaryotic RPC10 RNA polymerase subunit family. Part of the RNA polymerase complex. The cofactor is Zn(2+).

It is found in the cytoplasm. It catalyses the reaction RNA(n) + a ribonucleoside 5'-triphosphate = RNA(n+1) + diphosphate. Its function is as follows. DNA-dependent RNA polymerase (RNAP) catalyzes the transcription of DNA into RNA using the four ribonucleoside triphosphates as substrates. In Pyrobaculum arsenaticum (strain DSM 13514 / JCM 11321 / PZ6), this protein is DNA-directed RNA polymerase subunit Rpo12.